Reading from the N-terminus, the 194-residue chain is Imidazoleglycerol-phosphate dehydratase (194 aa).

The protein belongs to the imidazoleglycerol-phosphate dehydratase family.

The protein resides in the cytoplasm. It catalyses the reaction D-erythro-1-(imidazol-4-yl)glycerol 3-phosphate = 3-(imidazol-4-yl)-2-oxopropyl phosphate + H2O. The protein operates within amino-acid biosynthesis; L-histidine biosynthesis; L-histidine from 5-phospho-alpha-D-ribose 1-diphosphate: step 6/9. The sequence is that of Imidazoleglycerol-phosphate dehydratase from Bacillus licheniformis (strain ATCC 14580 / DSM 13 / JCM 2505 / CCUG 7422 / NBRC 12200 / NCIMB 9375 / NCTC 10341 / NRRL NRS-1264 / Gibson 46).